The following is an 89-amino-acid chain: DNA/RNA-binding protein Alba 2 (89 aa).

N6-acetyllysine is present on Lys-12. Lys-14, Asp-18, and Asp-22 together coordinate Zn(2+).

It belongs to the histone-like Alba family. In terms of assembly, forms homodimers and homotetramers. Homodimer at pH below 6.0. Forms homotetramers and higher order homooligomers at near the growth temperature of 80 degrees Celsius and pH 7.0. Interacts with Alba 1; heterodimers lack cooperative DNA-binding behavior and result in more compact chromatin structures compared to Alba 1 homodimers. Acetylated. Acetylation at Lys-12 decreases DNA-binding affinity.

It is found in the cytoplasm. The protein resides in the chromosome. Its function is as follows. Binds single-stranded DNA, RNA and double-stranded DNA. Involved in DNA compaction. The sequence is that of DNA/RNA-binding protein Alba 2 from Saccharolobus solfataricus (strain ATCC 35092 / DSM 1617 / JCM 11322 / P2) (Sulfolobus solfataricus).